The following is a 198-amino-acid chain: NAD(P)H dehydrogenase (quinone) (198 aa).

Residues 4–189 enclose the Flavodoxin-like domain; the sequence is ILVLYYSMYG…SIARYQGEYV (186 aa). Residues 10–15 and 78–80 each bind FMN; these read SMYGHI and TRF. Y12 lines the NAD(+) pocket. Residue W98 coordinates substrate. Residues 113 to 118 and H133 contribute to the FMN site; that span reads STGTGG.

Belongs to the WrbA family. FMN serves as cofactor.

The enzyme catalyses a quinone + NADH + H(+) = a quinol + NAD(+). It carries out the reaction a quinone + NADPH + H(+) = a quinol + NADP(+). This is NAD(P)H dehydrogenase (quinone) from Salmonella paratyphi C (strain RKS4594).